Here is a 272-residue protein sequence, read N- to C-terminus: Imidazole glycerol phosphate synthase subunit HisF (272 aa).

Active-site residues include aspartate 11 and aspartate 130.

It belongs to the HisA/HisF family. As to quaternary structure, heterodimer of HisH and HisF.

It localises to the cytoplasm. The catalysed reaction is 5-[(5-phospho-1-deoxy-D-ribulos-1-ylimino)methylamino]-1-(5-phospho-beta-D-ribosyl)imidazole-4-carboxamide + L-glutamine = D-erythro-1-(imidazol-4-yl)glycerol 3-phosphate + 5-amino-1-(5-phospho-beta-D-ribosyl)imidazole-4-carboxamide + L-glutamate + H(+). It functions in the pathway amino-acid biosynthesis; L-histidine biosynthesis; L-histidine from 5-phospho-alpha-D-ribose 1-diphosphate: step 5/9. IGPS catalyzes the conversion of PRFAR and glutamine to IGP, AICAR and glutamate. The HisF subunit catalyzes the cyclization activity that produces IGP and AICAR from PRFAR using the ammonia provided by the HisH subunit. This is Imidazole glycerol phosphate synthase subunit HisF from Methanococcus vannielii (strain ATCC 35089 / DSM 1224 / JCM 13029 / OCM 148 / SB).